A 227-amino-acid polypeptide reads, in one-letter code: MLITIPDLLTPEEVAYMRQILEGTAWVDGRSTAGDQAGKVKRNLQVPVDSPEARELGNIVLRALGRSPVYSSAALPAHILPPMFNRYDEGMTFGAHVDGSIRVVPGTGQRIRTDVSTTVFLTPPEDYDGGELVMHDTYGQHSVKLPAGHAVVYPATSLHSVTPVTRGSRWASFFWAQSMVRDDWRRHMLYDLDMSIMRIRSMLPDDDPAVTGITAHYHNMIRHWAET.

A Fe2OG dioxygenase domain is found at 78–178 (HILPPMFNRY…RWASFFWAQS (101 aa)). 3 residues coordinate Fe cation: His-96, Asp-98, and His-159. A 2-oxoglutarate-binding site is contributed by Arg-169.

It depends on Fe(2+) as a cofactor. L-ascorbate serves as cofactor.

This chain is PKHD-type hydroxylase Pden_4677, found in Paracoccus denitrificans (strain Pd 1222).